Consider the following 481-residue polypeptide: ATP synthase subunit alpha (481 aa).

Residue 145-152 (GDRQTGKT) coordinates ATP.

It belongs to the ATPase alpha/beta chains family. F-type ATPases have 2 components, CF(1) - the catalytic core - and CF(0) - the membrane proton channel. CF(1) has five subunits: alpha(3), beta(3), gamma(1), delta(1), epsilon(1). CF(0) has three main subunits: a(1), b(2) and c(9-12). The alpha and beta chains form an alternating ring which encloses part of the gamma chain. CF(1) is attached to CF(0) by a central stalk formed by the gamma and epsilon chains, while a peripheral stalk is formed by the delta and b chains.

It localises to the cell membrane. The enzyme catalyses ATP + H2O + 4 H(+)(in) = ADP + phosphate + 5 H(+)(out). Produces ATP from ADP in the presence of a proton gradient across the membrane. The alpha chain is a regulatory subunit. The polypeptide is ATP synthase subunit alpha (Carsonella ruddii (strain PV)).